Consider the following 649-residue polypeptide: Threonine--tRNA ligase (649 aa).

The TGS domain maps to methionine 1 to threonine 63. The catalytic stretch occupies residues aspartate 245–proline 543. Zn(2+) is bound by residues cysteine 339, histidine 390, and histidine 520.

Belongs to the class-II aminoacyl-tRNA synthetase family. In terms of assembly, homodimer. Zn(2+) serves as cofactor.

The protein resides in the cytoplasm. It carries out the reaction tRNA(Thr) + L-threonine + ATP = L-threonyl-tRNA(Thr) + AMP + diphosphate + H(+). Its function is as follows. Catalyzes the attachment of threonine to tRNA(Thr) in a two-step reaction: L-threonine is first activated by ATP to form Thr-AMP and then transferred to the acceptor end of tRNA(Thr). Also edits incorrectly charged L-seryl-tRNA(Thr). This chain is Threonine--tRNA ligase, found in Ligilactobacillus salivarius (strain UCC118) (Lactobacillus salivarius).